We begin with the raw amino-acid sequence, 285 residues long: Chitinase 4 (285 aa).

The signal sequence occupies residues 1–27 (MAAKMATMVALVFGLALLLSAAAPAAA). The region spanning 28-62 (QNCGCQDGYCCSQWGYCGTTEAYCGQGCQSGPCWG) is the Chitin-binding type-1 domain. 7 cysteine pairs are disulfide-bonded: C30-C38, C32-C44, C37-C51, C55-C60, C104-C153, C166-C175, and C253-C285. The active-site Proton donor is E148.

The protein belongs to the glycosyl hydrolase 19 family. Chitinase class IV subfamily. As to expression, expressed at low levels in leaves, sheaths and meristems.

The enzyme catalyses Random endo-hydrolysis of N-acetyl-beta-D-glucosaminide (1-&gt;4)-beta-linkages in chitin and chitodextrins.. In terms of biological role, hydrolyzes chitin and may function in reproductive organs during embryogenesis and seed maturation. The protein is Chitinase 4 (Cht4) of Oryza sativa subsp. japonica (Rice).